A 356-amino-acid polypeptide reads, in one-letter code: Cytochrome c oxidase subunit 2 (356 aa).

A signal peptide spans 1-20 (MVKHWRLILLLALVPLLLSG). The N-palmitoyl cysteine moiety is linked to residue Cys-21. A lipid anchor (S-diacylglycerol cysteine) is attached at Cys-21. Residues 21-47 (CGKPFLSTLKPAGEVADKQYDLTVLST) are Extracellular-facing. The cytochrome c oxidase subunit II stretch occupies residues 21–257 (CGKPFLSTLK…KNYKSTAESD (237 aa)). The chain crosses the membrane as a helical span at residues 48–66 (LIMVVVVAVVSVIFFYVIV). The Cytoplasmic segment spans residues 67–87 (RFRRSRVGENTIPKQVEGNKF). The helical transmembrane segment at 88–106 (LEITWTVIPILLLIILVIP) threads the bilayer. Residues 107 to 356 (VVLYTLELAD…YLKGLKAESK (250 aa)) lie on the Extracellular side of the membrane. Positions 176, 217, 221, and 225 each coordinate Cu cation. Positions 258–356 (LAKQGEELFK…YLKGLKAESK (99 aa)) constitute a Cytochrome c domain. Heme c contacts are provided by Cys-271, Cys-274, His-275, and Met-329.

Belongs to the cytochrome c oxidase subunit 2 family. Cu cation is required as a cofactor. Heme c serves as cofactor.

The protein resides in the cell membrane. It carries out the reaction 4 Fe(II)-[cytochrome c] + O2 + 8 H(+)(in) = 4 Fe(III)-[cytochrome c] + 2 H2O + 4 H(+)(out). Its function is as follows. Subunits I and II form the functional core of the enzyme complex. Electrons originating in cytochrome c are transferred via heme a and Cu(A) to the binuclear center formed by heme a3 and Cu(B). In Bacillus subtilis (strain 168), this protein is Cytochrome c oxidase subunit 2 (ctaC).